Consider the following 404-residue polypeptide: Serine/threonine transporter SstT (404 aa).

9 helical membrane-spanning segments follow: residues 17-37 (IGIGVVIGLLLGILLPDVTAI), 39-59 (ILGQLFVGALKAIAPLLVFAL), 75-95 (MTLIIVLYLLGTFLAALVAVI), 138-158 (ALATANYIGVLAWALIFGLAL), 179-199 (IVVWIINVAPIGIMGLVFSTV), 212-232 (LLILVLVGTMLFVALVVNPLL), 287-307 (IPLGAMINMGGAAITINVLTL), 319-339 (FLTALLLSVVAAISACGASGV), and 354-374 (FGISSDLAMQVVGVGFIVGVI).

Belongs to the dicarboxylate/amino acid:cation symporter (DAACS) (TC 2.A.23) family.

Its subcellular location is the cell membrane. It catalyses the reaction L-serine(in) + Na(+)(in) = L-serine(out) + Na(+)(out). The catalysed reaction is L-threonine(in) + Na(+)(in) = L-threonine(out) + Na(+)(out). Functionally, involved in the import of serine and threonine into the cell, with the concomitant import of sodium (symport system). This chain is Serine/threonine transporter SstT, found in Streptococcus equi subsp. equi (strain 4047).